Here is a 99-residue protein sequence, read N- to C-terminus: Endothelin receptor type B (99 aa).

The Extracellular segment spans residues 1–8 (PFGAEMCK). Residues Cys-7 and Cys-88 are joined by a disulfide bond. Residues 9-30 (LVPFIQKASVGITVLSLCALSI) traverse the membrane as a helical segment. At 31–51 (DRYRAVASWSRIKGIGIPKWT) the chain is on the cytoplasmic side. The helical transmembrane segment at 52-76 (AVEIVLIWVVSVVLAVPEAIGFDMI) threads the bilayer. Over 77 to 99 (TMDYKGSYLRICLLHPVQKTAFM) the chain is Extracellular.

It belongs to the G-protein coupled receptor 1 family. Endothelin receptor subfamily. EDNRB sub-subfamily.

It localises to the cell membrane. Non-specific receptor for endothelin 1, 2, and 3. Mediates its action by association with G proteins that activate a phosphatidylinositol-calcium second messenger system. This Macaca fascicularis (Crab-eating macaque) protein is Endothelin receptor type B (EDNRB).